The primary structure comprises 310 residues: Glutaminase (310 aa).

Positions 66, 117, 161, 168, 192, 244, and 262 each coordinate substrate.

Belongs to the glutaminase family. In terms of assembly, homotetramer.

The catalysed reaction is L-glutamine + H2O = L-glutamate + NH4(+). The protein is Glutaminase of Shigella boydii serotype 4 (strain Sb227).